The primary structure comprises 346 residues: Biotin synthase (346 aa).

The span at 1 to 12 (MPDTATVSSESE) shows a compositional bias: polar residues. Residues 1–21 (MPDTATVSSESEFSGHAHVAA) are disordered. Residues 64–292 (NKVQLCSLLS…QSMVRLSAGR (229 aa)) enclose the Radical SAM core domain. Positions 79, 83, and 86 each coordinate [4Fe-4S] cluster. [2Fe-2S] cluster-binding residues include Cys123, Cys155, Cys215, and Arg287.

This sequence belongs to the radical SAM superfamily. Biotin synthase family. In terms of assembly, homodimer. [4Fe-4S] cluster is required as a cofactor. Requires [2Fe-2S] cluster as cofactor.

The catalysed reaction is (4R,5S)-dethiobiotin + (sulfur carrier)-SH + 2 reduced [2Fe-2S]-[ferredoxin] + 2 S-adenosyl-L-methionine = (sulfur carrier)-H + biotin + 2 5'-deoxyadenosine + 2 L-methionine + 2 oxidized [2Fe-2S]-[ferredoxin]. It participates in cofactor biosynthesis; biotin biosynthesis; biotin from 7,8-diaminononanoate: step 2/2. In terms of biological role, catalyzes the conversion of dethiobiotin (DTB) to biotin by the insertion of a sulfur atom into dethiobiotin via a radical-based mechanism. This chain is Biotin synthase, found in Myxococcus xanthus (strain DK1622).